The chain runs to 327 residues: Annexin A8 (327 aa).

Annexin repeat units follow at residues 21–92 (FNPV…ALMY), 93–164 (PPYR…CLLQ), 177–249 (GLAL…TIVK), and 253–324 (NLHC…SLVG). The Ca(2+) site is built by Met266, Gly268, Gly270, and Asp310.

Belongs to the annexin family.

This protein is an anticoagulant protein that acts as an indirect inhibitor of the thromboplastin-specific complex, which is involved in the blood coagulation cascade. In Oryctolagus cuniculus (Rabbit), this protein is Annexin A8 (ANXA8).